A 353-amino-acid polypeptide reads, in one-letter code: Phospho-N-acetylmuramoyl-pentapeptide-transferase (353 aa).

10 helical membrane-spanning segments follow: residues 22-42 (FAFF…ITWA), 65-85 (TPTM…LFCI), 88-108 (DNIF…IGLI), 129-149 (LLAQ…SSEL), 161-181 (PLFD…ISSS), 192-212 (GLAT…LYLS), 228-248 (GLGE…GFLW), 256-276 (VFMG…LAII), 281-301 (ILLL…ILQV), and 330-350 (KIIV…LASI).

Belongs to the glycosyltransferase 4 family. MraY subfamily. It depends on Mg(2+) as a cofactor.

The protein localises to the cell inner membrane. It carries out the reaction UDP-N-acetyl-alpha-D-muramoyl-L-alanyl-gamma-D-glutamyl-meso-2,6-diaminopimeloyl-D-alanyl-D-alanine + di-trans,octa-cis-undecaprenyl phosphate = di-trans,octa-cis-undecaprenyl diphospho-N-acetyl-alpha-D-muramoyl-L-alanyl-D-glutamyl-meso-2,6-diaminopimeloyl-D-alanyl-D-alanine + UMP. It functions in the pathway cell wall biogenesis; peptidoglycan biosynthesis. Functionally, catalyzes the initial step of the lipid cycle reactions in the biosynthesis of the cell wall peptidoglycan: transfers peptidoglycan precursor phospho-MurNAc-pentapeptide from UDP-MurNAc-pentapeptide onto the lipid carrier undecaprenyl phosphate, yielding undecaprenyl-pyrophosphoryl-MurNAc-pentapeptide, known as lipid I. The protein is Phospho-N-acetylmuramoyl-pentapeptide-transferase of Campylobacter jejuni (strain RM1221).